Here is a 212-residue protein sequence, read N- to C-terminus: Adenylate kinase (212 aa).

10 to 15 contributes to the ATP binding site; sequence GAGKGT. The NMP stretch occupies residues 30-59; sequence STGDMFRAAMANQTEMGRLAKSYIDKGELV. Residues T31, R36, 57 to 59, 86 to 89, and Q93 contribute to the AMP site; these read ELV and GYPR. The tract at residues 127 to 159 is LID; sequence GRIINRKTGETFHKVFNPPVDYKEEDYYQREDD. Residues R128 and 137–138 each bind ATP; that span reads TF. 2 residues coordinate AMP: R156 and R167. Residue Q195 coordinates ATP.

The protein belongs to the adenylate kinase family. In terms of assembly, monomer.

The protein resides in the cytoplasm. It catalyses the reaction AMP + ATP = 2 ADP. It functions in the pathway purine metabolism; AMP biosynthesis via salvage pathway; AMP from ADP: step 1/1. Its function is as follows. Catalyzes the reversible transfer of the terminal phosphate group between ATP and AMP. Plays an important role in cellular energy homeostasis and in adenine nucleotide metabolism. The protein is Adenylate kinase of Streptococcus pyogenes serotype M5 (strain Manfredo).